The following is a 160-amino-acid chain: Cytochrome c-type biogenesis protein CcmE (160 aa).

Residues 1–9 are Cytoplasmic-facing; that stretch reads MRGLKKKRR. A helical; Signal-anchor for type II membrane protein membrane pass occupies residues 10 to 30; that stretch reads IQIIAIAAVALTIATIMIGTA. Topologically, residues 31–160 are periplasmic; sequence MRDGINFFRS…DGGYGGASGS (130 aa). Heme is bound by residues His-123 and Tyr-127. Positions 141–160 are disordered; the sequence is VYKDPNATDADGGYGGASGS.

The protein belongs to the CcmE/CycJ family.

Its subcellular location is the cell inner membrane. Heme chaperone required for the biogenesis of c-type cytochromes. Transiently binds heme delivered by CcmC and transfers the heme to apo-cytochromes in a process facilitated by CcmF and CcmH. The sequence is that of Cytochrome c-type biogenesis protein CcmE from Dinoroseobacter shibae (strain DSM 16493 / NCIMB 14021 / DFL 12).